A 463-amino-acid polypeptide reads, in one-letter code: Succinate--CoA ligase [ADP-forming] subunit beta, mitochondrial (463 aa).

A mitochondrion-targeting transit peptide spans 1 to 53 (MAASVFYGRLLAVATLRNHRPRTALGAAAQVLGSSGLFNNHGLQVQQQQQRNL). Positions 61–288 (MELLQEAGVS…SNSAYRQKKI (228 aa)) constitute an ATP-grasp domain. K78 is subject to N6-acetyllysine. Y84 bears the Phosphotyrosine mark. Residue K88 is modified to N6-acetyllysine; alternate. The residue at position 88 (K88) is an N6-succinyllysine; alternate. ATP contacts are provided by residues K98 and 105 to 107 (GRG). 4 positions are modified to N6-acetyllysine: K129, K139, K143, and K216. 2 residues coordinate Mg(2+): N258 and D272. Position 279 is a phosphoserine (S279). Position 323 (N323) interacts with substrate. A Phosphothreonine modification is found at T341. The residue at position 368 (K368) is an N6-acetyllysine. Residue 380–382 (GIM) coordinates substrate.

The protein belongs to the succinate/malate CoA ligase beta subunit family. ATP-specific subunit beta subfamily. In terms of assembly, heterodimer of an alpha and a beta subunit. The beta subunit determines specificity for ATP. Interacts with ALAS2. The cofactor is Mg(2+).

The protein localises to the mitochondrion. It catalyses the reaction succinate + ATP + CoA = succinyl-CoA + ADP + phosphate. It participates in carbohydrate metabolism; tricarboxylic acid cycle; succinate from succinyl-CoA (ligase route): step 1/1. In terms of biological role, ATP-specific succinyl-CoA synthetase functions in the citric acid cycle (TCA), coupling the hydrolysis of succinyl-CoA to the synthesis of ATP and thus represents the only step of substrate-level phosphorylation in the TCA. The beta subunit provides nucleotide specificity of the enzyme and binds the substrate succinate, while the binding sites for coenzyme A and phosphate are found in the alpha subunit. The protein is Succinate--CoA ligase [ADP-forming] subunit beta, mitochondrial of Macaca fascicularis (Crab-eating macaque).